The sequence spans 357 residues: sn-glycerol-3-phosphate import ATP-binding protein UgpC (357 aa).

The ABC transporter domain maps to 4-235 (LKLQAVTKSY…PASLFVASFI (232 aa)). Residue 37–44 (GPSGCGKS) participates in ATP binding.

It belongs to the ABC transporter superfamily. sn-glycerol-3-phosphate importer (TC 3.A.1.1.3) family. As to quaternary structure, the complex is composed of two ATP-binding proteins (UgpC), two transmembrane proteins (UgpA and UgpE) and a solute-binding protein (UgpB).

It is found in the cell inner membrane. The catalysed reaction is sn-glycerol 3-phosphate(out) + ATP + H2O = sn-glycerol 3-phosphate(in) + ADP + phosphate + H(+). Functionally, part of the ABC transporter complex UgpBAEC involved in sn-glycerol-3-phosphate (G3P) import. Responsible for energy coupling to the transport system. The polypeptide is sn-glycerol-3-phosphate import ATP-binding protein UgpC (Pectobacterium atrosepticum (strain SCRI 1043 / ATCC BAA-672) (Erwinia carotovora subsp. atroseptica)).